A 299-amino-acid polypeptide reads, in one-letter code: Troponin T, cardiac muscle (299 aa).

A compositionally biased stretch (acidic residues) spans 1–71 (MSDAEEEVVE…EARDAEDGPV (71 aa)). 2 disordered regions span residues 1 to 97 (MSDA…GERV) and 137 to 220 (DRIE…EKKK). The residue at position 2 (Ser2) is an N-acetylserine. A Phosphoserine modification is found at Ser2. Basic and acidic residues-rich tracts occupy residues 137-185 (DRIE…DEAR) and 204-220 (QTER…EKKK). Position 205 is a phosphothreonine; by PKC/PRKCA (Thr205). At Ser209 the chain carries Phosphoserine; by PKC/PRKCA. A Phosphothreonine; by PKC/PRKCA and RAF1 modification is found at Thr214. Phosphothreonine; by PKC/PRKCA is present on Thr295.

The protein belongs to the troponin T family. Phosphorylation at Thr-214 by PRKCA induces significant reduction in myofilament calcium sensitivity and actomyosin ATPase activity.

Functionally, troponin T is the tropomyosin-binding subunit of troponin, the thin filament regulatory complex which confers calcium-sensitivity to striated muscle actomyosin ATPase activity. In Rattus norvegicus (Rat), this protein is Troponin T, cardiac muscle (Tnnt2).